A 496-amino-acid polypeptide reads, in one-letter code: Probable chlorophyll(ide) b reductase NYC1, chloroplastic (496 aa).

The transit peptide at 1–43 directs the protein to the chloroplast; the sequence is MTTLTKIQVYPQVLEHRLFFRDPIRVGSRLTCRERSNRVYVHR. 2 helical membrane-spanning segments follow: residues 105–125 and 132–152; these read YIVTMTSTGAILLIGFQLSGG and LVWYSWLGGIIIGTMTGANMV. Residue 166-190 participates in NAD(+) binding; sequence ITGSTRGLGKALAREFLLSGDRVIV. A coiled-coil region spans residues 195–224; that stretch reads SESVDMTVKELEQNLKEIMSNASESARKKL. Y330 acts as the Proton acceptor in catalysis. A helical transmembrane segment spans residues 470-490; the sequence is WVSVFSLSVVCAFIILQSTTP.

It belongs to the short-chain dehydrogenases/reductases (SDR) family. As to quaternary structure, interacts with NOL to form a complex that acts as a chlorophyll b reductase. Interacts with HCAR, RCCR, SGR1 and the LHCII complex. Part of a SGR1-CCE-LHCII complex, which acts in chlorophyll breakdown.

The protein resides in the plastid. It localises to the chloroplast thylakoid membrane. It carries out the reaction 7(1)-hydroxychlorophyllide a + NAD(+) = chlorophyllide b + NADH + H(+). The catalysed reaction is 7(1)-hydroxychlorophyllide a + NADP(+) = chlorophyllide b + NADPH + H(+). In terms of biological role, involved in chlorophyll b degradation. Belongs to the chlorophyll catabolic enzymes (CCEs). The chain is Probable chlorophyll(ide) b reductase NYC1, chloroplastic (NYC1) from Arabidopsis thaliana (Mouse-ear cress).